The sequence spans 417 residues: Tol-Pal system protein TolB (417 aa).

Residues 1 to 16 (MKYLWLFLIYAIGLFA) form the signal peptide.

Belongs to the TolB family. In terms of assembly, the Tol-Pal system is composed of five core proteins: the inner membrane proteins TolA, TolQ and TolR, the periplasmic protein TolB and the outer membrane protein Pal. They form a network linking the inner and outer membranes and the peptidoglycan layer.

The protein localises to the periplasm. Functionally, part of the Tol-Pal system, which plays a role in outer membrane invagination during cell division and is important for maintaining outer membrane integrity. The sequence is that of Tol-Pal system protein TolB from Helicobacter pylori (strain J99 / ATCC 700824) (Campylobacter pylori J99).